Here is a 708-residue protein sequence, read N- to C-terminus: Lactotransferrin (708 aa).

The N-terminal stretch at 1–19 is a signal peptide; sequence MKLFVPALLSLGALGLCLA. Transferrin-like domains follow at residues 25-352 and 364-693; these read VRWC…NLRE and VVWC…NLKK. Disulfide bonds link C28–C64 and C38–C55. D79 serves as a coordination point for Fe cation. K92 is an active-site residue. Y111 is a Fe cation binding site. 5 cysteine pairs are disulfide-bonded: C134-C217, C176-C192, C179-C202, C189-C200, and C250-C264. 4 residues coordinate hydrogencarbonate: T136, R140, A142, and G143. Y211 is a binding site for Fe cation. N-linked (GlcNAc...) (high mannose) asparagine glycosylation occurs at N252. Fe cation is bound at residue H272. S278 acts as the Nucleophile in catalysis. Residue N300 is glycosylated (N-linked (GlcNAc...) (hybrid) asparagine). Cystine bridges form between C367/C399 and C377/C390. 2 residues coordinate Fe cation: D414 and Y452. 8 disulfides stabilise this stretch: C424–C703, C444–C666, C476–C551, C500–C694, C510–C524, C521–C534, C592–C606, and C644–C649. Residues T478, R482, A484, and G485 each contribute to the hydrogencarbonate site. N495 is a glycosylation site (N-linked (GlcNAc...) (complex) asparagine; alternate). An N-linked (GlcNAc...) (high mannose) asparagine; alternate glycan is attached at N495. Residue N495 is glycosylated (N-linked (GlcNAc...) (hybrid) asparagine; alternate). Y545 lines the Fe cation pocket. The N-linked (GlcNAc...) (high mannose) asparagine glycan is linked to N564. A Fe cation-binding site is contributed by H614.

This sequence belongs to the transferrin family. As to quaternary structure, monomer. Found in a complex with LTF, CLU, EPPIN and SEMG1. Found in a complex with MPO and LTF; interacts directly with CP, allows Fe(3+) incorporation into LTF and activation of CP ferroxidase activity. Poly-N-acetyllactosaminic carbohydrate moiety seems to be needed for TLR4 activation.

Its subcellular location is the secreted. The protein localises to the cytoplasmic granule. Transferrins are iron binding transport proteins which can bind two Fe(3+) ions in association with the binding of an anion, usually bicarbonate. Its function is as follows. Major iron-binding and multifunctional protein found in exocrine fluids such as breast milk and mucosal secretions. Has antimicrobial activity, which depends on the extracellular cation concentration. Antimicrobial properties include bacteriostasis, which is related to its ability to sequester free iron and thus inhibit microbial growth, as well as direct bactericidal properties leading to the release of lipopolysaccharides from the bacterial outer membrane. Can also prevent bacterial biofilm development in P.aeruginosa infection. Has weak antifungal activity against C.albicans. Has anabolic, differentiating and anti-apoptotic effects on osteoblasts and can also inhibit osteoclastogenesis, possibly playing a role in the regulation of bone growth. Promotes binding of species C adenoviruses to epithelial cells, promoting adenovirus infection. Can inhibit papillomavirus infections. Stimulates the TLR4 signaling pathway leading to NF-kappa-B activation and subsequent pro-inflammatory cytokine production while also interfering with the lipopolysaccharide (LPS)-stimulated TLR4 signaling. Inhibits neutrophil granulocyte migration to sites of apoptosis, when secreted by apoptotic cells. Stimulates VEGFA-mediated endothelial cell migration and proliferation. Binds heparin, chondroitin sulfate and possibly other glycosaminoglycans (GAGs). Also binds specifically to pneumococcal surface protein A (PspA), the lipid A portion of bacterial lipopolysaccharide (LPS), lysozyme and DNA. Functionally, lactoferricin binds to the bacterial surface and is crucial for the bactericidal functions. Has some antiviral activity against papillomavirus infection. N-terminal region shows strong antifungal activity against C.albicans. Contains two BBXB heparin-binding consensus sequences that appear to form the predominate functional GAG-binding site. In terms of biological role, the lactotransferrin transferrin-like domain 1 functions as a serine protease of the peptidase S60 family that cuts arginine rich regions. This function contributes to the antimicrobial activity. Shows a preferential cleavage at -Arg-Ser-Arg-Arg-|- and -Arg-Arg-Ser-Arg-|-, and of Z-Phe-Arg-|-aminomethylcoumarin sites. This Bubalus bubalis (Domestic water buffalo) protein is Lactotransferrin (LTF).